The chain runs to 305 residues: UDP-3-O-acyl-N-acetylglucosamine deacetylase (305 aa).

Zn(2+) contacts are provided by H78, H237, and D241. H264 functions as the Proton donor in the catalytic mechanism.

This sequence belongs to the LpxC family. Zn(2+) serves as cofactor.

The enzyme catalyses a UDP-3-O-[(3R)-3-hydroxyacyl]-N-acetyl-alpha-D-glucosamine + H2O = a UDP-3-O-[(3R)-3-hydroxyacyl]-alpha-D-glucosamine + acetate. The protein operates within glycolipid biosynthesis; lipid IV(A) biosynthesis; lipid IV(A) from (3R)-3-hydroxytetradecanoyl-[acyl-carrier-protein] and UDP-N-acetyl-alpha-D-glucosamine: step 2/6. In terms of biological role, catalyzes the hydrolysis of UDP-3-O-myristoyl-N-acetylglucosamine to form UDP-3-O-myristoylglucosamine and acetate, the committed step in lipid A biosynthesis. The sequence is that of UDP-3-O-acyl-N-acetylglucosamine deacetylase from Burkholderia ambifaria (strain ATCC BAA-244 / DSM 16087 / CCUG 44356 / LMG 19182 / AMMD) (Burkholderia cepacia (strain AMMD)).